The sequence spans 1335 residues: Regulatory-associated protein of mTOR (1335 aa).

Residues Ser-44 and Ser-122 each carry the phosphoserine modification. Residue Ser-696 is modified to Phosphoserine; by MAPK8. Thr-700 carries O-linked (GlcNAc) threonine glycosylation. The residue at position 706 (Thr-706) is a Phosphothreonine; by MAPK8. A phosphoserine; by RPS6KA1 mark is found at Ser-719 and Ser-721. Ser-722 is modified (phosphoserine; by AMPK and RPS6KA1). Ser-738 bears the Phosphoserine mark. Ser-791 carries the post-translational modification Phosphoserine; by PKA. Ser-792 carries the post-translational modification Phosphoserine; by AMPK. Residues Ser-836 and Ser-855 each carry the phosphoserine modification. Residues 850-943 (VLDTSSLTQS…PEQTADDADD (94 aa)) are disordered. The segment covering 851-866 (LDTSSLTQSAPASPTN) has biased composition (polar residues). The residue at position 859 (Ser-859) is a Phosphoserine; by MTOR. Position 863 is a phosphoserine; by MAPK8, MTOR and NLK (Ser-863). Thr-865 carries the post-translational modification Phosphothreonine. Low complexity predominate over residues 874–887 (AGGSPPASSTSSSS). Phosphoserine; by TBK1 is present on Ser-877. Glycyl lysine isopeptide (Lys-Gly) (interchain with G-Cter in ubiquitin) cross-links involve residues Lys-932 and Lys-948. Phosphoserine is present on Ser-982. 7 WD repeats span residues 1020–1061 (NRNP…DYFH), 1065–1106 (PRYT…EKNP), 1121–1160 (TTRG…KVQD), 1164–1203 (GADS…SECR), 1209–1249 (EHTA…SVNV), 1251–1291 (QIVK…NNIK), and 1299–1335 (QRVG…KRVR). Lys-1097 bears the N6-acetyllysine mark.

This sequence belongs to the WD repeat RAPTOR family. As to quaternary structure, part of the mechanistic target of rapamycin complex 1 (mTORC1) which contains MTOR, MLST8 and RPTOR. mTORC1 associates with AKT1S1/PRAS40, which inhibits its activity. mTORC1 associates with DEPTOR, which regulates its activity. mTORC1 binds to and is inhibited by FKBP12-rapamycin. Forms a complex with MTOR under both leucine-rich and -poor conditions. Interacts with (via TOS motifs) EIF4EBP1 and RPS6KB1; interaction is independent of its association with MTOR. Binds preferentially to poorly or non-phosphorylated forms of EIF4EBP1, and this binding is critical to the ability of MTOR to catalyze phosphorylation. Interacts with ULK1 in a nutrient-dependent manner; the interaction is reduced during starvation. Interacts with GTP-bound form of RagA/RRAGA or RagB/RRAGB and GDP-bound form of RagC/RRAGC or RagD/RRAGD, promoting recruitment of mTORC1 to the lysosomes. Interacts (when phosphorylated by AMPK) with 14-3-3 protein, leading to inhibition of its activity. Interacts with SPAG5; SPAG5 competes with MTOR for RPTOR-binding, resulting in decreased mTORC1 formation. Interacts with WAC; WAC positively regulates MTOR activity by promoting the assembly of the TTT complex composed of TELO2, TTI1 and TTI2 and the RUVBL complex composed of RUVBL1 and RUVBL2 into the TTT-RUVBL complex which leads to the dimerization of the mTORC1 complex and its subsequent activation. Interacts with G3BP1. The complex formed with G3BP1 and SPAG5 is increased by oxidative stress. Interacts with HTR6. Interacts with PIH1D1. Interacts with LARP1. Interacts with BRAT1. Interacts with SIK3. Interacts with SLC38A7; this interaction mediates the recruitment of mTORC1 to the lysosome and its subsequent activation. (Microbial infection) Interacts with vaccinia virus protein F17; this interaction dysregulates mTOR. In terms of processing, insulin-stimulated phosphorylation at Ser-863 by MTOR and MAPK8 regulates mTORC1 activity. Phosphorylated at Ser-863 by NLK in response to stress, disrupting the interaction with small GTPases Rag (RagA/RRAGA, RagB/RRAGB, RagC/RRAGC and/or RagD/RRAGD), thereby preventing lysosome recruitment and activation of the mTORC1 complex. Osmotic stress also induces phosphorylation at Ser-696, Thr-706 and Ser-863 by MAPK8. Ser-863 phosphorylation is required for phosphorylation at Ser-855 and Ser-859. In response to nutrient limitation, phosphorylated at Ser-722 and Ser-792 by AMPK; phosphorylation promotes interaction with 14-3-3 proteins, leading to negative regulation of the mTORC1 complex. Phosphorylation at Ser-722 and Ser-792 by AMPK in response to glucose starvation inhibits O-GlcNAcylation by OGT and subsequent activation of mTORC1. In response to growth factors, phosphorylated at Ser-719, Ser-721 and Ser-722 by RPS6KA1, which stimulates mTORC1 activity. Phosphorylation at Ser-791 by PKA downstream of cAMP inhibits the mTORC1 complex. Phosphorylated at Ser-877 by TBK1, leading to negative regulation of the mTORC1 complex. Post-translationally, O-GlcNAcylated by OGT upon glucose sufficiency, promoting interaction with small GTPases Rag (RagA/RRAGA, RagB/RRAGB, RagC/RRAGC and/or RagD/RRAGD) and subsequent recruitment of mTORC1 to lysosomal membranes, leading to activation of the mTORC1 complex. Phosphorylation at Ser-722 and Ser-792 by AMPK in response to glucose starvation inhibits O-GlcNAcylation. Acetylation at Lys-1097 by EP300/p300 in response to leucine metabolite acetyl-coA promotes its activity, leading to activation of the mTORC1 complex. Acetylation is decreased in response to fasting. In terms of processing, ubiquitinated, leading to its degradation by the proteasome. Deubiquitinated by OTUB1 via a non-catalytic mechanism. Ubiquitinated by an E3 ubiquitin ligase complex containing VHL. In terms of tissue distribution, highly expressed in skeletal muscle, and in a lesser extent in brain, lung, small intestine, kidney and placenta. Widely expressed, with highest levels in nasal mucosa and pituitary and lowest in spleen.

It localises to the lysosome membrane. The protein resides in the cytoplasm. Its subcellular location is the cytoplasmic granule. Its function is as follows. Component of the mechanistic target of rapamycin complex 1 (mTORC1), an evolutionarily conserved central nutrient sensor that stimulates anabolic reactions and macromolecule biosynthesis to promote cellular biomass generation and growth. In response to nutrients, growth factors or amino acids, mTORC1 is recruited to the lysosome membrane and promotes protein, lipid and nucleotide synthesis by phosphorylating several substrates, such as ribosomal protein S6 kinase (RPS6KB1 and RPS6KB2) and EIF4EBP1 (4E-BP1). In the same time, it inhibits catabolic pathways by phosphorylating the autophagy initiation components ULK1 and ATG13, as well as transcription factor TFEB, a master regulators of lysosomal biogenesis and autophagy. The mTORC1 complex is inhibited in response to starvation and amino acid depletion. Within the mTORC1 complex, RPTOR acts both as a molecular adapter, which (1) mediates recruitment of mTORC1 to lysosomal membranes via interaction with small GTPases Rag (RagA/RRAGA, RagB/RRAGB, RagC/RRAGC and/or RagD/RRAGD), and a (2) substrate-specific adapter, which promotes substrate specificity by binding to TOS motif-containing proteins and direct them towards the active site of the MTOR kinase domain for phosphorylation. mTORC1 complex regulates many cellular processes, such as odontoblast and osteoclast differentiation or neuronal transmission. mTORC1 complex in excitatory neuronal transmission is required for the prosocial behavior induced by the psychoactive substance lysergic acid diethylamide (LSD). The sequence is that of Regulatory-associated protein of mTOR from Homo sapiens (Human).